Here is a 356-residue protein sequence, read N- to C-terminus: Protein ATP1B4 (356 aa).

At 1–109 (MRRQLRSRRA…SLARTGQSRS (109 aa)) the chain is on the nuclear side. Residues 32-77 (LADEEEEAEEEAQVMMVPGLEEEEEEEEGKEEEEEREEEEGQGQST) are disordered. 2 stretches are compositionally biased toward acidic residues: residues 33 to 43 (ADEEEEAEEEA) and 51 to 72 (LEEE…EEEG). A helical; Signal-anchor for type II membrane protein transmembrane segment spans residues 110 to 130 (LILVIYFFFYASLAAVITLFI). Residues 131–356 (YMLFLAISPY…RIIFTLNIET (226 aa)) are Perinuclear space-facing.

The protein belongs to the X(+)/potassium ATPases subunit beta family. In terms of assembly, does not associate with known Na,K-ATPase alpha-subunits. Associates with a SMAD7-transcriptional complex. Interacts with SNW1 and TOR1AIP1. As to expression, expressed in perinatal myocytes (at protein level). Expressed during postnatal development in skeletal muscle and heart.

It localises to the nucleus inner membrane. In terms of biological role, may act as a transcriptional coregulator during muscle development through its interaction with SNW1. Has lost its ancestral function as a Na,K-ATPase beta-subunit. The sequence is that of Protein ATP1B4 (Atp1b4) from Rattus norvegicus (Rat).